Here is a 472-residue protein sequence, read N- to C-terminus: Nucleoporin NUP49/NSP49 (472 aa).

An FG 1 repeat occupies 2–3 (FG). A GLFG 1 repeat occupies 14–17 (GLFG). Residues 28-104 (NTGFSFGGTQ…TANTGGGLFG (77 aa)) are disordered. One copy of the FG 2 repeat lies at 33–34 (FG). The stretch at 48-51 (GLFG) is one GLFG 2 repeat. A compositionally biased stretch (low complexity) spans 64-80 (SFGQQQQQSQTNAFGGS). 2 FG repeats span residues 65–66 (FG) and 77–78 (FG). 2 GLFG repeats span residues 86 to 89 (GLFG) and 101 to 104 (GLFG). The SLFG 1 repeat unit spans residues 113–116 (SLFG). GLFG repeat units follow at residues 125-128 (GLFG) and 148-151 (GLFG). One copy of the SLFG 2 repeat lies at 159–162 (SLFG). The GLFG 7; approximate repeat unit spans residues 175-178 (GMFG). One copy of the SLFG 3 repeat lies at 185 to 188 (SLFG). The GLFG 8 repeat unit spans residues 199–202 (GLFG). An SLFG 4 repeat occupies 210–213 (SLFG). Residues 211–242 (LFGSSNNNNNNNNSNNIMSASGGLFGNQQQQL) form a disordered region. A compositionally biased stretch (low complexity) spans 214–226 (SSNNNNNNNNSNN). Residues 233 to 236 (GLFG) form a GLFG 9 repeat.

This sequence belongs to the nucleoporin GLFG family. Component of the nuclear pore complex (NPC). NPC constitutes the exclusive means of nucleocytoplasmic transport. NPCs allow the passive diffusion of ions and small molecules and the active, nuclear transport receptor-mediated bidirectional transport of macromolecules such as proteins, RNAs, ribonucleoparticles (RNPs), and ribosomal subunits across the nuclear envelope. Due to its 8-fold rotational symmetry, all subunits are present with 8 copies or multiples thereof. NUP49 is part of the NUP57 subcomplex (NIC96, NSP1, NUP49, NUP57) interacting with NUP57. Interacts through its FG repeats with karyopherins.

It localises to the nucleus. The protein resides in the nuclear pore complex. Its subcellular location is the nucleus membrane. In terms of biological role, functions as a component of the nuclear pore complex (NPC). NPC components, collectively referred to as nucleoporins (NUPs), can play the role of both NPC structural components and of docking or interaction partners for transiently associated nuclear transport factors. Active directional transport is assured by both, a Phe-Gly (FG) repeat affinity gradient for these transport factors across the NPC and a transport cofactor concentration gradient across the nuclear envelope (GSP1 and GSP2 GTPases associated predominantly with GTP in the nucleus, with GDP in the cytoplasm). NUP49 plays an important role in several nuclear transport pathways including poly(A)+ RNA, tRNA, and pre-ribosome transport. The polypeptide is Nucleoporin NUP49/NSP49 (NUP49) (Saccharomyces cerevisiae (strain ATCC 204508 / S288c) (Baker's yeast)).